Consider the following 186-residue polypeptide: Ribosome-recycling factor (186 aa).

It belongs to the RRF family.

It localises to the cytoplasm. Responsible for the release of ribosomes from messenger RNA at the termination of protein biosynthesis. May increase the efficiency of translation by recycling ribosomes from one round of translation to another. The protein is Ribosome-recycling factor of Chelativorans sp. (strain BNC1).